Consider the following 499-residue polypeptide: Aprataxin and PNK-like factor (499 aa).

The region spanning 1 to 108 (MPSDFFLQPL…RVFSAESEVE (108 aa)) is the FHA-like domain. At serine 116 the chain carries Phosphoserine; by ATM. Disordered stretches follow at residues 134-183 (VNLP…TQRK), 197-292 (DQSL…KTNK), and 305-358 (VSKH…DTAD). Polar residues predominate over residues 141–152 (TGASQLQGSPEI). Position 149 is a phosphoserine (serine 149). Residues 182–191 (RKRILPAWML) carry the KBM motif. The segment covering 239–248 (PSGNSKSVSA) has biased composition (polar residues). Residues 251–261 (DPGKKCRKADQ) show a composition bias toward basic and acidic residues. The segment covering 264-278 (PGVSSENVPESSSSN) has biased composition (low complexity). A compositionally biased stretch (basic and acidic residues) spans 281 to 292 (KDPDVDIVKTNK). A compositionally biased stretch (low complexity) spans 340–349 (PESSSAPSSP). The a glycoprotein site is built by arginine 371, tyrosine 376, tyrosine 381, and arginine 382. A PBZ-type 1 zinc finger spans residues 372–393 (TACMYGANCYRRNPLHFQHFSH). The interval 401 to 411 (EVHGTDEGVIG) is flexible linker. A PBZ-type 2 zinc finger spans residues 414 to 435 (PECPYGASCYRKNPQHKMEYRH). Residues tyrosine 418, tyrosine 423, and arginine 424 each coordinate a glycoprotein. The disordered stretch occupies residues 440-499 (ARVALDEDDDDVGQPSDDEDEEDYEPTDEDSDWHPGKDDEEQEDVDELLKEAKSSLHLKH). Residues 445–470 (DEDDDDVGQPSDDEDEEDYEPTDEDS) show a composition bias toward acidic residues. The short motif at 463–487 (YEPTDEDSDWHPGKDDEEQEDVDEL) is the NAP1L motif element.

Belongs to the APLF family. In terms of assembly, interacts with LIG4. Interacts with PARP1. Interacts with XRCC4. Interacts (via KBM motif) with XRCC5 and XRCC6; promoting recruitment to DNA damage sites. Interacts with XRCC1. Interacts (via C-terminal disordered region) with histones; interacts with histone H2A, H2B and H3-H4. In terms of processing, poly-ADP-ribosylated. In addition to binding non covalently poly-ADP-ribose via its PBZ-type zinc fingers, the protein is also covalently poly-ADP-ribosylated by PARP1. Post-translationally, phosphorylated in an ATM-dependent manner upon double-strand DNA break.

It is found in the nucleus. The protein resides in the chromosome. It localises to the cytoplasm. The protein localises to the cytosol. Functionally, histone chaperone involved in single-strand and double-strand DNA break repair. Recruited to sites of DNA damage through interaction with branched poly-ADP-ribose chains, a polymeric post-translational modification synthesized transiently at sites of chromosomal damage to accelerate DNA strand break repair reactions. Following recruitment to DNA damage sites, acts as a histone chaperone that mediates histone eviction during DNA repair and promotes recruitment of histone variant MACROH2A1. Also has a nuclease activity: displays apurinic-apyrimidinic (AP) endonuclease and 3'-5' exonuclease activities in vitro. Also able to introduce nicks at hydroxyuracil and other types of pyrimidine base damage. Together with PARP3, promotes the retention of the LIG4-XRCC4 complex on chromatin and accelerate DNA ligation during non-homologous end-joining (NHEJ). Also acts as a negative regulator of cell pluripotency by promoting histone exchange. Required for the embryo implantation during the epithelial to mesenchymal transition in females. This Mus musculus (Mouse) protein is Aprataxin and PNK-like factor (Aplf).